A 374-amino-acid chain; its full sequence is RNA binding protein fox-1 homolog 3 (374 aa).

The span at Met1–Pro29 shows a compositional bias: pro residues. A disordered region spans residues Met1 to Asn105. The span at Thr49–Pro74 shows a compositional bias: polar residues. The region spanning Lys99–Ala175 is the RRM domain. Arg223 bears the Asymmetric dimethylarginine; alternate mark. An Omega-N-methylarginine; alternate modification is found at Arg223. The residue at position 319 (Arg319) is an Asymmetric dimethylarginine.

Phosphorylated. Widely expressed in brain, including in cerebral cortex, hippocampus, thalamus, caudate/putamen, cerebellum, as well as in the spinal cord (at protein level). Not expressed in all neuronal cells within a region, in cerebellum, expression is absent in Purkinje cells (at protein level). Expressed in the retina in the ganglion cells and some cells in the inner nuclear layer, but absent from the photoreceptor cells and most cells in the inner nuclear layer (at protein level).

The protein localises to the nucleus. The protein resides in the cytoplasm. Functionally, pre-mRNA alternative splicing regulator. Regulates alternative splicing of RBFOX2 to enhance the production of mRNA species that are targeted for nonsense-mediated decay (NMD). This chain is RNA binding protein fox-1 homolog 3 (Rbfox3), found in Mus musculus (Mouse).